A 611-amino-acid chain; its full sequence is Leukotriene A-4 hydrolase (611 aa).

At lysine 73 the chain carries N6-acetyllysine. A peptide-binding positions include glutamine 135–glutamine 137 and serine 267–glutamate 272. Histidine 296 is a binding site for Zn(2+). Glutamate 297 (proton acceptor) is an active-site residue. Residues histidine 300 and glutamate 319 each coordinate Zn(2+). Residue lysine 337 is modified to N6-acetyllysine. The active-site Proton donor is tyrosine 384. Lysine 414 is subject to N6-acetyllysine. Serine 416 bears the Phosphoserine mark. Arginine 564–lysine 566 is a binding site for a peptide. The residue at position 573 (lysine 573) is an N6-acetyllysine.

This sequence belongs to the peptidase M1 family. Monomer. The cofactor is Zn(2+). Post-translationally, phosphorylation at Ser-416 inhibits leukotriene-A4 hydrolase activity. activity.

It is found in the cytoplasm. The enzyme catalyses leukotriene A4 + H2O = leukotriene B4. It catalyses the reaction (5S,6S)-epoxy-(18R)-hydroxy-(7E,9E,11Z,14Z,16E)-eicosapentaenoate + H2O = resolvin E1. The catalysed reaction is (5S,6S)-epoxy-(18S)-hydroxy-(7E,9E,11Z,14Z,16E)-eicosapentaenoate + H2O = 18S-resolvin E1. It carries out the reaction Release of the N-terminal residue from a tripeptide.. Its pathway is lipid metabolism; leukotriene B4 biosynthesis. Inhibited by bestatin. The epoxide hydrolase activity is restrained by suicide inactivation that involves binding of LTA4 to Tyr-379. 4-(4-benzylphenyl)thiazol-2-amine (ARM1) selectively inhibits the epoxide hydrolase activity. Its function is as follows. Bifunctional zinc metalloenzyme that comprises both epoxide hydrolase (EH) and aminopeptidase activities. Acts as an epoxide hydrolase to catalyze the conversion of LTA4 to the pro-inflammatory mediator leukotriene B4 (LTB4). Also has aminopeptidase activity, with high affinity for N-terminal arginines of various synthetic tripeptides. In addition to its pro-inflammatory EH activity, may also counteract inflammation by its aminopeptidase activity, which inactivates by cleavage another neutrophil attractant, the tripeptide Pro-Gly-Pro (PGP), a bioactive fragment of collagen generated by the action of matrix metalloproteinase-9 (MMP9) and prolylendopeptidase (PREPL). Involved also in the biosynthesis of resolvin E1 and 18S-resolvin E1 from eicosapentaenoic acid, two lipid mediators that show potent anti-inflammatory and pro-resolving actions. The sequence is that of Leukotriene A-4 hydrolase (LTA4H) from Cavia porcellus (Guinea pig).